The chain runs to 453 residues: Na(+)/H(+) antiporter NhaA (453 aa).

11 helical membrane passes run 28-48 (FLHIEAFSGVVLLLAAAAALI), 79-99 (LHFLINDGLMTIFFLVVGMEI), 115-135 (ALPLAAALGGVVVPALIYFIL), 144-164 (GWAVPTATDIAFAVGVLALLG), 173-193 (VFLLALAIIDDIVAVLIIAVF), 196-216 (GGMDYSGFIIAAVGILMVLGM), 241-261 (TGAHPTLAGVVLGLMTPVFAP), 321-341 (VAFGIMPLFALANAGVSLDGI), 355-375 (VLIALVAGKPLGIIGASFLMV), 393-413 (LVGLLAGIGFTMSIFIATLAF), and 424-444 (LGILLASLSAAVLGLAWGFFQ).

The protein belongs to the NhaA Na(+)/H(+) (TC 2.A.33) antiporter family.

The protein resides in the cell inner membrane. It carries out the reaction Na(+)(in) + 2 H(+)(out) = Na(+)(out) + 2 H(+)(in). Its function is as follows. Na(+)/H(+) antiporter that extrudes sodium in exchange for external protons. This is Na(+)/H(+) antiporter NhaA from Janthinobacterium sp. (strain Marseille) (Minibacterium massiliensis).